A 257-amino-acid polypeptide reads, in one-letter code: Isoprenyl transferase (257 aa).

Asp33 is a catalytic residue. Residue Asp33 participates in Mg(2+) binding. Substrate-binding positions include Gly34 to Arg37, Trp38, Arg46, His50, and Ser78 to Glu80. Asn81 acts as the Proton acceptor in catalysis. Substrate is bound by residues Trp82, Arg84, Arg204, and Arg210–Ser212. Glu223 serves as a coordination point for Mg(2+).

Belongs to the UPP synthase family. Homodimer. The cofactor is Mg(2+).

Its function is as follows. Catalyzes the condensation of isopentenyl diphosphate (IPP) with allylic pyrophosphates generating different type of terpenoids. The sequence is that of Isoprenyl transferase from Clostridium acetobutylicum (strain ATCC 824 / DSM 792 / JCM 1419 / IAM 19013 / LMG 5710 / NBRC 13948 / NRRL B-527 / VKM B-1787 / 2291 / W).